Consider the following 62-residue polypeptide: Large ribosomal subunit protein eL24 (62 aa).

Zn(2+)-binding residues include Cys-6, Cys-9, Cys-32, and Cys-36. The C4-type zinc finger occupies 6–36; that stretch reads CSFCGADIPPGYGIMYVRSDGTVQRFCSRKC.

This sequence belongs to the eukaryotic ribosomal protein eL24 family. Part of the 50S ribosomal subunit. Forms a cluster with proteins L3 and L14. Zn(2+) is required as a cofactor.

Binds to the 23S rRNA. This is Large ribosomal subunit protein eL24 from Pyrobaculum calidifontis (strain DSM 21063 / JCM 11548 / VA1).